The sequence spans 154 residues: Bacterial ferritin (154 aa).

Residues M1–G145 form the Ferritin-like diiron domain. Residues E18, H46, E47, E50, E51, H54, E93, D129, and H130 each contribute to the Fe(3+) site.

The protein belongs to the bacterioferritin family. In terms of assembly, the bacterioferritin (BFR) complex is formed of 24 subunits (FtnA and BfrB) arranged as 12 homodimers. The holocomplex contains about 8.7% Fe and 8.0% phosphate. In vivo purifies with BfrB in varying ratios, depending on the O(2) content; as O(2) decreases FtnA content rises. Pure FtnA BFR complexes are not isolated in situ, although in a bfrB deletion some iron will accumulate in FtnA ferritin complexes. Upon crystallization forms homooligomers of 24 subunits, the BFR complex, arranged as 12 dimers, that are packed together to form an approximately spherical molecule with a central cavity, in which large amounts of iron can be deposited. The BFR shell has three- and four-fold pores; Fe(2+) may move in and out of the shell via the four-fold pores. Does not interact with Bfd.

It localises to the cytoplasm. The enzyme catalyses 4 Fe(2+) + O2 + 4 H(+) = 4 Fe(3+) + 2 H2O. It carries out the reaction Fe(2+)(in) = Fe(2+)(out). In terms of biological role, plays a role in catalase A (katA) expression; activity is required for optimal KatA activity and resistance to H(2)O(2). Iron-storage protein that is part of the heterooligomeric bacterioferritin (BFR) complex. The ferroxidase center binds Fe(2+), oxidizes it using dioxygen to Fe(3+), and participates in subsequent Fe(3+) oxide mineral core formation within the central cavity of the BFR protein shell. Can store up to 520 iron atoms per ferritin protein molecule. Iron release requires only the input of electrons from ferredoxin NADP reductase (FPR), does not require Bfd. Does not bind heme. This Pseudomonas aeruginosa (strain ATCC 15692 / DSM 22644 / CIP 104116 / JCM 14847 / LMG 12228 / 1C / PRS 101 / PAO1) protein is Bacterial ferritin.